Reading from the N-terminus, the 545-residue chain is Chaperonin GroEL (545 aa).

Residues 29 to 32, Lys-50, 86 to 90, Gly-413, and Asp-495 contribute to the ATP site; these read TLGP and DGTTT.

It belongs to the chaperonin (HSP60) family. As to quaternary structure, forms a cylinder of 14 subunits composed of two heptameric rings stacked back-to-back. Interacts with the co-chaperonin GroES.

The protein localises to the cytoplasm. It carries out the reaction ATP + H2O + a folded polypeptide = ADP + phosphate + an unfolded polypeptide.. In terms of biological role, together with its co-chaperonin GroES, plays an essential role in assisting protein folding. The GroEL-GroES system forms a nano-cage that allows encapsulation of the non-native substrate proteins and provides a physical environment optimized to promote and accelerate protein folding. This Borrelia garinii subsp. bavariensis (strain ATCC BAA-2496 / DSM 23469 / PBi) (Borreliella bavariensis) protein is Chaperonin GroEL.